The chain runs to 410 residues: Multifunctional CCA protein (410 aa).

ATP is bound by residues Gly-8 and Arg-11. CTP is bound by residues Gly-8 and Arg-11. Mg(2+) is bound by residues Asp-21 and Asp-23. ATP-binding residues include Arg-91, Arg-138, and Arg-141. The CTP site is built by Arg-91, Arg-138, and Arg-141. The region spanning 229–347 (TGIHQEMVSD…AQLALVCEAD (119 aa)) is the HD domain.

Belongs to the tRNA nucleotidyltransferase/poly(A) polymerase family. Bacterial CCA-adding enzyme type 1 subfamily. As to quaternary structure, monomer. Can also form homodimers and oligomers. Mg(2+) serves as cofactor. Requires Ni(2+) as cofactor.

The enzyme catalyses a tRNA precursor + 2 CTP + ATP = a tRNA with a 3' CCA end + 3 diphosphate. It carries out the reaction a tRNA with a 3' CCA end + 2 CTP + ATP = a tRNA with a 3' CCACCA end + 3 diphosphate. Functionally, catalyzes the addition and repair of the essential 3'-terminal CCA sequence in tRNAs without using a nucleic acid template. Adds these three nucleotides in the order of C, C, and A to the tRNA nucleotide-73, using CTP and ATP as substrates and producing inorganic pyrophosphate. tRNA 3'-terminal CCA addition is required both for tRNA processing and repair. Also involved in tRNA surveillance by mediating tandem CCA addition to generate a CCACCA at the 3' terminus of unstable tRNAs. While stable tRNAs receive only 3'-terminal CCA, unstable tRNAs are marked with CCACCA and rapidly degraded. The sequence is that of Multifunctional CCA protein from Xanthomonas oryzae pv. oryzae (strain MAFF 311018).